A 433-amino-acid polypeptide reads, in one-letter code: Protein arginine N-methyltransferase 2 (433 aa).

Residues 1–27 (MSTSGCSSEKSDFQDSTEGEEEEDTQS) form a disordered region. Positions 15–26 (DSTEGEEEEDTQ) are enriched in acidic residues. Positions 30–89 (LCMREYVVIRDYMAADATQLSLCFGDKVLLLSAVTQDWWWVKHNGICGYVPASYLHDALN) constitute an SH3 domain. Residues 102-416 (DEEYYGSYKT…MSVTLSWVIN (315 aa)) enclose the SAM-dependent MTase PRMT-type domain. The S-adenosyl-L-methionine site is built by H115, R124, G148, E171, and E200. Active-site residues include E214 and E223.

It belongs to the class I-like SAM-binding methyltransferase superfamily. Protein arginine N-methyltransferase family. As to quaternary structure, interacts with ctnnb1.

The protein resides in the cytoplasm. It localises to the nucleus. It catalyses the reaction L-arginyl-[protein] + 2 S-adenosyl-L-methionine = N(omega),N(omega)-dimethyl-L-arginyl-[protein] + 2 S-adenosyl-L-homocysteine + 2 H(+). Functionally, arginine methyltransferase that methylates the guanidino nitrogens of arginyl residues in proteins such as histones. Involved in growth regulation. Involved in embryonic dorsal development. This chain is Protein arginine N-methyltransferase 2 (prmt2), found in Xenopus tropicalis (Western clawed frog).